The sequence spans 1625 residues: Nonribosomal peptide synthetase aclP (1625 aa).

The Carrier 1 domain maps to 47–123; sequence TTMNPSSQLL…ALFTDLLSSE (77 aa). At S84 the chain carries O-(pantetheine 4'-phosphoryl)serine. The disordered stretch occupies residues 127 to 157; it reads IPIPDPSDDSDDLSNPSSSTGGSPRVATPIS. Residues 286 to 567 are condensation 1; that stretch reads ASSQSTVIWA…KYFQRALQLL (282 aa). The tract at residues 614-997 is adenylation; sequence FESAVSRNPM…GRTDRQIKLR (384 aa). A Carrier 2 domain is found at 1096-1171; that stretch reads SPMEKLVGDA…HLAAAIDSGL (76 aa). Residue S1131 is modified to O-(pantetheine 4'-phosphoryl)serine. Positions 1195-1585 are condensation 2; the sequence is EWWHKYQINE…LQARIPLALS (391 aa).

The protein belongs to the NRP synthetase family.

It functions in the pathway mycotoxin biosynthesis. Nonribosomal peptide synthetase; part of the gene cluster that mediates the biosynthesis of aspirochlorine (or antibiotic A30641), an unusual halogenated spiro compound with distinctive antifungal properties due to selective inhibition of protein biosynthesis, and which is also active against bacteria, viruses, and murine tumor cells. The non-ribosomal peptide synthetase (NRPS) aclP is responsible the formation of the diketopiperazine (DKP) core from the condensation of 2 phenylalanine residues. One Phe residue is tailored into chlorotyrosine by hydroxylation and chlorination, whereas the second Phe undergoes an unprecedented C-C bond cleavage to be converted into glycine. After formation of the DKP, sulfur is incorporated into the DKP by conjugation with glutathione by aclG, followed by its stepwise degradation to the thiol by aclI, aclJ and aclK, and the dithiol oxidation by aclT. In addition, oxygenases (aclB, aclC, aclL and aclO) and O-methyltransferases (aclM and aclU) act as tailoring enzymes to produce the intermediate dechloroaspirochlorine. Ultimately, chlorination of dechloroaspirochlorine by the halogenase aclH is the last step in the aspirochlorine pathway. The sequence is that of Nonribosomal peptide synthetase aclP from Aspergillus oryzae (strain ATCC 42149 / RIB 40) (Yellow koji mold).